A 76-amino-acid chain; its full sequence is Conotoxin Cal5a L1 (76 aa).

Residues 1–22 (MRFYIGLMAALMLTSILRTDSA) form the signal peptide. Positions 23–42 (SVDQTGAEGGLALIERVIRQ) are excised as a propeptide. Pro50 is subject to 4-hydroxyproline. Pro58 is subject to 4-hydroxyproline; in form cal5a, and form cal5b. A 4-hydroxyproline; in form cal5a, form cal5b, and form cal5c modification is found at Pro62. Pro64 carries the post-translational modification 4-hydroxyproline; in form cal5a, form cal5b, form cal5c, and form cal5d.

In terms of processing, contains 2 disulfide bonds that can be either 'C1-C3, C2-C4' or 'C1-C4, C2-C3', since these disulfide connectivities have been observed for conotoxins with cysteine framework V (for examples, see AC P0DQQ7 and AC P81755). Post-translationally, five different peptides have been described after total venom examination by HPLC-MS. Cal5a is the longest. Cal5b-Cal5e are identical in length but are differentially hydroxylated. It is possible that hydroxylation and proteolysis at position 53 are incomplete in some of these peptides. In terms of tissue distribution, expressed by the venom duct.

The protein localises to the secreted. Its function is as follows. Probable neurotoxin with unknown target. Possibly targets ion channels. This chain is Conotoxin Cal5a L1, found in Californiconus californicus (California cone).